The sequence spans 200 residues: 3-isopropylmalate dehydratase small subunit (200 aa).

It belongs to the LeuD family. LeuD type 1 subfamily. As to quaternary structure, heterodimer of LeuC and LeuD.

The enzyme catalyses (2R,3S)-3-isopropylmalate = (2S)-2-isopropylmalate. It participates in amino-acid biosynthesis; L-leucine biosynthesis; L-leucine from 3-methyl-2-oxobutanoate: step 2/4. In terms of biological role, catalyzes the isomerization between 2-isopropylmalate and 3-isopropylmalate, via the formation of 2-isopropylmaleate. The protein is 3-isopropylmalate dehydratase small subunit of Yersinia pseudotuberculosis serotype I (strain IP32953).